Here is a 277-residue protein sequence, read N- to C-terminus: Uridine-cytidine kinase 1 (277 aa).

Gly residues predominate over residues 1–10 (MASAGGGDCE). A disordered region spans residues 1-29 (MASAGGGDCEGAGPEADRPHQRPFLIGVS). 30–38 (GGTASGKST) is an ATP binding site. Substrate is bound by residues Asp-87, Tyr-115, His-120, Arg-169, Arg-178, and Gln-186. An ATP-binding site is contributed by Asp-215. Residues 246-277 (RSHKRTFPEPGEHPAVLASGKRSHLESSSRPH) form a disordered region. A Phosphothreonine modification is found at Thr-251. Positions 268–277 (SHLESSSRPH) are enriched in basic and acidic residues.

Belongs to the uridine kinase family.

It carries out the reaction uridine + ATP = UMP + ADP + H(+). The enzyme catalyses cytidine + ATP = CMP + ADP + H(+). It functions in the pathway pyrimidine metabolism; CTP biosynthesis via salvage pathway; CTP from cytidine: step 1/3. It participates in pyrimidine metabolism; UMP biosynthesis via salvage pathway; UMP from uridine: step 1/1. Functionally, phosphorylates uridine and cytidine to uridine monophosphate and cytidine monophosphate. Does not phosphorylate deoxyribonucleosides or purine ribonucleosides. Can use ATP or GTP as a phosphate donor. The polypeptide is Uridine-cytidine kinase 1 (UCK1) (Bos taurus (Bovine)).